We begin with the raw amino-acid sequence, 306 residues long: Large ribosomal subunit protein uL2m (306 aa).

The transit peptide at 1–60 directs the protein to the mitochondrion; that stretch reads MALCALTSALRSLSLASAAITARVPTLLPAAQIQSNVLLQLPPALVSPSYRPVHMSADRS.

It belongs to the universal ribosomal protein uL2 family. Component of the mitochondrial ribosome large subunit (39S) which comprises a 16S rRNA and about 50 distinct proteins.

The protein localises to the mitochondrion. In Mus musculus (Mouse), this protein is Large ribosomal subunit protein uL2m (Mrpl2).